The chain runs to 107 residues: Nucleoid-associated protein RF_1365 (107 aa).

Belongs to the YbaB/EbfC family. In terms of assembly, homodimer.

The protein resides in the cytoplasm. It is found in the nucleoid. Its function is as follows. Binds to DNA and alters its conformation. May be involved in regulation of gene expression, nucleoid organization and DNA protection. The polypeptide is Nucleoid-associated protein RF_1365 (Rickettsia felis (strain ATCC VR-1525 / URRWXCal2) (Rickettsia azadi)).